Here is a 149-residue protein sequence, read N- to C-terminus: MKVVLVKDVEGLGFFGDVVNVKDGYAMNYLIPRGLALPATEGNIKHIQTILAQKERKLLREKKKAEELAKKLEGMVIGIKKPAGEGGKLFGSVTPADIVNALKEKGIEIERKNVVFYHPIKEVGVFPVKIRLHKDVEVDIKVDVKPEEK.

It belongs to the bacterial ribosomal protein bL9 family.

Binds to the 23S rRNA. This Aquifex aeolicus (strain VF5) protein is Large ribosomal subunit protein bL9.